We begin with the raw amino-acid sequence, 335 residues long: Probable BOI-related E3 ubiquitin-protein ligase 3 (335 aa).

A WRD domain region spans residues 196–232 (LEEKVKSLCVENQIWRDVAQSNEATVNALRSNLQQVL). An RING-type zinc finger spans residues 287-322 (CRSCGKGEASVLLLPCRHMCLCSVCGSSLNTCPICK).

As to quaternary structure, interacts with the DELLA proteins GAI, RGA, RGL1, RGL2 and RGL3.

It catalyses the reaction S-ubiquitinyl-[E2 ubiquitin-conjugating enzyme]-L-cysteine + [acceptor protein]-L-lysine = [E2 ubiquitin-conjugating enzyme]-L-cysteine + N(6)-ubiquitinyl-[acceptor protein]-L-lysine.. It participates in protein degradation; proteasomal ubiquitin-dependent pathway. In terms of biological role, probable E3 ubiquitin-protein ligase. Has no effect on the stability of the DELLA proteins. In Arabidopsis thaliana (Mouse-ear cress), this protein is Probable BOI-related E3 ubiquitin-protein ligase 3 (BRG3).